The primary structure comprises 307 residues: Dihydroorotate dehydrogenase A (fumarate) (307 aa).

Residues S21 and 46-47 (KT) each bind FMN. Substrate contacts are provided by residues K46, 70–74 (NSVGL), and N130. N130 contributes to the FMN binding site. C133 functions as the Nucleophile in the catalytic mechanism. The FMN site is built by K168 and I194. Residue 195–196 (NT) coordinates substrate. FMN is bound by residues G220, 246–247 (GG), and 268–269 (GS).

Belongs to the dihydroorotate dehydrogenase family. Type 1 subfamily. Homodimer. The cofactor is FMN.

The protein resides in the cytoplasm. The enzyme catalyses (S)-dihydroorotate + fumarate = orotate + succinate. It participates in pyrimidine metabolism; UMP biosynthesis via de novo pathway. In terms of biological role, catalyzes the conversion of dihydroorotate to orotate with fumarate as the electron acceptor. The protein is Dihydroorotate dehydrogenase A (fumarate) (pyrD) of Lactobacillus delbrueckii subsp. bulgaricus (strain ATCC 11842 / DSM 20081 / BCRC 10696 / JCM 1002 / NBRC 13953 / NCIMB 11778 / NCTC 12712 / WDCM 00102 / Lb 14).